An 883-amino-acid chain; its full sequence is Phosphoenolpyruvate carboxylase (883 aa).

Active-site residues include histidine 138 and lysine 546.

It belongs to the PEPCase type 1 family. As to quaternary structure, homotetramer. The cofactor is Mg(2+).

The catalysed reaction is oxaloacetate + phosphate = phosphoenolpyruvate + hydrogencarbonate. With respect to regulation, the enzyme has distinct binding sites for each of the allosteric effectors such as acetyl-CoA, fructose 1,6-bisphosphate, guanosine 3'-diphosphate 5'-diphosphate, long chain fatty acids, and L-aspartate. In terms of biological role, forms oxaloacetate, a four-carbon dicarboxylic acid source for the tricarboxylic acid cycle. The chain is Phosphoenolpyruvate carboxylase (ppc) from Salmonella typhi.